Here is a 546-residue protein sequence, read N- to C-terminus: Thermolysin (546 aa).

The first 25 residues, 1–25 (MDKRAMLGAIGLAFGLMAWPFGASA), serve as a signal peptide directing secretion. The propeptide at 26–228 (KEKSMVWNEQ…EAKPGGGQPV (203 aa)) is activation peptide. Positions 287, 289, 291, and 368 each coordinate Ca(2+). H372 serves as a coordination point for Zn(2+). E373 is an active-site residue. Positions 376 and 396 each coordinate Zn(2+). Positions 413, 415, 417, 420, 423, 424, 427, and 430 each coordinate Ca(2+). H461 serves as the catalytic Proton donor.

This sequence belongs to the peptidase M4 family. Ca(2+) is required as a cofactor. It depends on Zn(2+) as a cofactor.

It localises to the secreted. The enzyme catalyses Preferential cleavage: Xaa-|-Leu &gt; Xaa-|-Phe.. Functionally, extracellular zinc metalloprotease. This chain is Thermolysin (npr), found in Bacillus caldolyticus.